A 270-amino-acid polypeptide reads, in one-letter code: Aliphatic sulfonates import ATP-binding protein SsuB 3 (270 aa).

Residues 17–238 form the ABC transporter domain; it reads LAVRKLKKAF…VRGSHRLAAL (222 aa). An ATP-binding site is contributed by 49–56; sequence GRSGCGKS.

Belongs to the ABC transporter superfamily. Aliphatic sulfonates importer (TC 3.A.1.17.2) family. In terms of assembly, the complex is composed of two ATP-binding proteins (SsuB), two transmembrane proteins (SsuC) and a solute-binding protein (SsuA).

The protein resides in the cell inner membrane. The catalysed reaction is ATP + H2O + aliphatic sulfonate-[sulfonate-binding protein]Side 1 = ADP + phosphate + aliphatic sulfonateSide 2 + [sulfonate-binding protein]Side 1.. Its function is as follows. Part of the ABC transporter complex SsuABC involved in aliphatic sulfonates import. Responsible for energy coupling to the transport system. The sequence is that of Aliphatic sulfonates import ATP-binding protein SsuB 3 from Pseudomonas syringae pv. syringae (strain B728a).